Reading from the N-terminus, the 245-residue chain is tRNA (guanine-N(7)-)-methyltransferase (245 aa).

The S-adenosyl-L-methionine site is built by Glu-71, Glu-96, Asp-123, and Asp-146. The active site involves Asp-146. Residue Lys-150 participates in substrate binding. An interaction with RNA region spans residues 152 to 157 (KHNKRR). Substrate-binding positions include Asp-182 and 224 to 227 (TKFE).

Belongs to the class I-like SAM-binding methyltransferase superfamily. TrmB family.

The catalysed reaction is guanosine(46) in tRNA + S-adenosyl-L-methionine = N(7)-methylguanosine(46) in tRNA + S-adenosyl-L-homocysteine. The protein operates within tRNA modification; N(7)-methylguanine-tRNA biosynthesis. Functionally, catalyzes the formation of N(7)-methylguanine at position 46 (m7G46) in tRNA. This Albidiferax ferrireducens (strain ATCC BAA-621 / DSM 15236 / T118) (Rhodoferax ferrireducens) protein is tRNA (guanine-N(7)-)-methyltransferase.